The chain runs to 173 residues: MTTIVCVRKDGKVAIGGDGQATLGNCVEKGTVRKVRRLYKDKVVTGFAGSTADAFILRDLFEKKLELHQGHLVKSAVELAKEWRTERSLRKLEAMMIVANESEFLLVSGSGDVIEPEFDVLAIGSGGNYAKAAALALLRTENNLSAKEIVAEALKIAGDIDIYSNHNHVIEEV.

Thr2 is an active-site residue. Positions 158, 161, and 164 each coordinate Na(+).

The protein belongs to the peptidase T1B family. HslV subfamily. In terms of assembly, a double ring-shaped homohexamer of HslV is capped on each side by a ring-shaped HslU homohexamer. The assembly of the HslU/HslV complex is dependent on binding of ATP.

It is found in the cytoplasm. It catalyses the reaction ATP-dependent cleavage of peptide bonds with broad specificity.. Its activity is regulated as follows. Allosterically activated by HslU binding. Protease subunit of a proteasome-like degradation complex believed to be a general protein degrading machinery. The sequence is that of ATP-dependent protease subunit HslV from Glaesserella parasuis serovar 5 (strain SH0165) (Haemophilus parasuis).